Reading from the N-terminus, the 300-residue chain is Tyrosine recombinase XerC (300 aa).

A Core-binding (CB) domain is found at 2–88 (TQEGKLEQQF…SLRSFYTFLL (87 aa)). A Tyr recombinase domain is found at 109–294 (RLPKFFYSEE…TKEHLKSTYM (186 aa)). Residues Arg150, Lys174, His246, Arg249, and His272 contribute to the active site. Tyr281 functions as the O-(3'-phospho-DNA)-tyrosine intermediate in the catalytic mechanism.

This sequence belongs to the 'phage' integrase family. XerC subfamily. In terms of assembly, forms a cyclic heterotetrameric complex composed of two molecules of XerC and two molecules of XerD.

It localises to the cytoplasm. Its function is as follows. Site-specific tyrosine recombinase, which acts by catalyzing the cutting and rejoining of the recombining DNA molecules. The XerC-XerD complex is essential to convert dimers of the bacterial chromosome into monomers to permit their segregation at cell division. It also contributes to the segregational stability of plasmids. The polypeptide is Tyrosine recombinase XerC (Listeria welshimeri serovar 6b (strain ATCC 35897 / DSM 20650 / CCUG 15529 / CIP 8149 / NCTC 11857 / SLCC 5334 / V8)).